The sequence spans 331 residues: uncharacterized protein (331 aa).

This sequence belongs to the IIV-6 335L family.

This is an uncharacterized protein from Invertebrate iridescent virus 6 (IIV-6).